Reading from the N-terminus, the 602-residue chain is Elongation factor 4 (602 aa).

A tr-type G domain is found at N2–R184. Residues D14–T19 and N131–D134 each bind GTP.

This sequence belongs to the TRAFAC class translation factor GTPase superfamily. Classic translation factor GTPase family. LepA subfamily.

The protein resides in the cell inner membrane. The enzyme catalyses GTP + H2O = GDP + phosphate + H(+). Its function is as follows. Required for accurate and efficient protein synthesis under certain stress conditions. May act as a fidelity factor of the translation reaction, by catalyzing a one-codon backward translocation of tRNAs on improperly translocated ribosomes. Back-translocation proceeds from a post-translocation (POST) complex to a pre-translocation (PRE) complex, thus giving elongation factor G a second chance to translocate the tRNAs correctly. Binds to ribosomes in a GTP-dependent manner. The sequence is that of Elongation factor 4 from Paracidovorax citrulli (strain AAC00-1) (Acidovorax citrulli).